The sequence spans 470 residues: Poly(A) polymerase catalytic subunit (470 aa).

Active-site residues include D192 and D194.

It belongs to the poxviridae poly(A) polymerase catalytic subunit family. As to quaternary structure, heterodimer of a large (catalytic) subunit and a small (regulatory) subunit.

It carries out the reaction RNA(n) + ATP = RNA(n)-3'-adenine ribonucleotide + diphosphate. Functionally, polymerase that creates the 3'-poly(A) tail of mRNA's. The protein is Poly(A) polymerase catalytic subunit (PAPL) of Oryctolagus cuniculus (Rabbit).